The following is a 254-amino-acid chain: Nickel import ATP-binding protein NikD (254 aa).

Residues 2-241 (PQQIELRNIA…PKHAVTRSLV (240 aa)) enclose the ABC transporter domain. Residue 36-43 (GGSGSGKS) coordinates ATP.

It belongs to the ABC transporter superfamily. Nickel importer (TC 3.A.1.5.3) family. As to quaternary structure, the complex is composed of two ATP-binding proteins (NikD and NikE), two transmembrane proteins (NikB and NikC) and a solute-binding protein (NikA).

It localises to the cell inner membrane. It carries out the reaction Ni(2+)(out) + ATP + H2O = Ni(2+)(in) + ADP + phosphate + H(+). In terms of biological role, part of the ABC transporter complex NikABCDE involved in nickel import. Responsible for energy coupling to the transport system. The chain is Nickel import ATP-binding protein NikD from Escherichia coli (strain UTI89 / UPEC).